The chain runs to 274 residues: Proteasome subunit beta (274 aa).

The propeptide at 1-52 (MPDPTGVAGRLPAVFMTPGTSSFTDFLSVAAPDLLPGARGPLPAPVTDAAHG) is removed in mature form; by autocatalysis. The Nucleophile role is filled by T53.

It belongs to the peptidase T1B family. The 20S proteasome core is composed of 14 alpha and 14 beta subunits that assemble into four stacked heptameric rings, resulting in a barrel-shaped structure. The two inner rings, each composed of seven catalytic beta subunits, are sandwiched by two outer rings, each composed of seven alpha subunits. The catalytic chamber with the active sites is on the inside of the barrel. Has a gated structure, the ends of the cylinder being occluded by the N-termini of the alpha-subunits. Is capped by the proteasome-associated ATPase, ARC.

The protein resides in the cytoplasm. The enzyme catalyses Cleavage of peptide bonds with very broad specificity.. Its pathway is protein degradation; proteasomal Pup-dependent pathway. Its activity is regulated as follows. The formation of the proteasomal ATPase ARC-20S proteasome complex, likely via the docking of the C-termini of ARC into the intersubunit pockets in the alpha-rings, may trigger opening of the gate for substrate entry. Interconversion between the open-gate and close-gate conformations leads to a dynamic regulation of the 20S proteasome proteolysis activity. Its function is as follows. Component of the proteasome core, a large protease complex with broad specificity involved in protein degradation. The chain is Proteasome subunit beta from Parafrankia sp. (strain EAN1pec).